The primary structure comprises 117 residues: Transcription elongation factor SPT4-B (117 aa).

The interaction with SUPT5H stretch occupies residues 1-40 (MALETVPKDLRHLRACLLCSLVKTIDQFEYDGCDNCDAYL). A C4-type zinc finger spans residues 16-36 (CLLCSLVKTIDQFEYDGCDNC).

Belongs to the SPT4 family. As to quaternary structure, interacts with SUPT5H to form DSIF. DSIF interacts with the positive transcription elongation factor b complex (P-TEFb complex), which is composed of CDK9 and cyclin-T (CCNT1 or CCNT2). DSIF interacts with RNA polymerase II, and this interaction is reduced by phosphorylation of the C-terminal domain (CTD) of POLR2A by P-TEFb. DSIF also interacts with the NELF complex, which is composed of WHSC2/NELFA, COBRA1/NELFB, TH1L/NELFD and RDBP/NELFE, and this interaction occurs following prior binding of DSIF to RNA polymerase II. DSIF also interacts with HRMT1L2/PRMT1, HTATSF1/TATSF1, RNGTT/CAP1A, SKB1/PRMT5, SUPT6H, and can interact with PIN1. In terms of processing, ubiquitinated by Ubr5 when not assembled in the DSIF complex, leading to its degradation: Ubr5 recognizes and binds a degron that is not accessible when Supt4h1b is part of the DSIF complex. Expressed in brain, heart and liver.

It localises to the nucleus. In terms of biological role, component of the DRB sensitivity-inducing factor complex (DSIF complex), which regulates mRNA processing and transcription elongation by RNA polymerase II. DSIF positively regulates mRNA capping by stimulating the mRNA guanylyltransferase activity of RNGTT/CAP1A. DSIF also acts cooperatively with the negative elongation factor complex (NELF complex) to enhance transcriptional pausing at sites proximal to the promoter. Transcriptional pausing may facilitate the assembly of an elongation competent RNA polymerase II complex. DSIF and NELF promote pausing by inhibition of the transcription elongation factor TFIIS/S-II. TFIIS/S-II binds to RNA polymerase II at transcription pause sites and stimulates the weak intrinsic nuclease activity of the enzyme. Cleavage of blocked transcripts by RNA polymerase II promotes the resumption of transcription from the new 3' terminus and may allow repeated attempts at transcription through natural pause sites. The chain is Transcription elongation factor SPT4-B (Supt4h1b) from Mus musculus (Mouse).